Reading from the N-terminus, the 514-residue chain is ATP synthase subunit alpha (514 aa).

ATP is bound at residue Gly-170–Thr-177.

It belongs to the ATPase alpha/beta chains family. F-type ATPases have 2 components, CF(1) - the catalytic core - and CF(0) - the membrane proton channel. CF(1) has five subunits: alpha(3), beta(3), gamma(1), delta(1), epsilon(1). CF(0) has three main subunits: a(1), b(2) and c(9-12). The alpha and beta chains form an alternating ring which encloses part of the gamma chain. CF(1) is attached to CF(0) by a central stalk formed by the gamma and epsilon chains, while a peripheral stalk is formed by the delta and b chains.

It localises to the cell inner membrane. The catalysed reaction is ATP + H2O + 4 H(+)(in) = ADP + phosphate + 5 H(+)(out). Its function is as follows. Produces ATP from ADP in the presence of a proton gradient across the membrane. The alpha chain is a regulatory subunit. The chain is ATP synthase subunit alpha from Psychrobacter arcticus (strain DSM 17307 / VKM B-2377 / 273-4).